The chain runs to 187 residues: UPF0301 protein Sbal195_3177 (187 aa).

It belongs to the UPF0301 (AlgH) family.

This is UPF0301 protein Sbal195_3177 from Shewanella baltica (strain OS195).